The primary structure comprises 103 residues: MQNQRIRIRLKAFDHKLIDQSTAEIVETAKRTGAQVRGPIPLPTRKERFTILVSPHVNKDARDQYEIRTHKRLIDIVEPTEKTVDALMKLDLAAGVDVQISLG.

This sequence belongs to the universal ribosomal protein uS10 family. Part of the 30S ribosomal subunit.

Involved in the binding of tRNA to the ribosomes. This is Small ribosomal subunit protein uS10 from Psychromonas ingrahamii (strain DSM 17664 / CCUG 51855 / 37).